The following is a 285-amino-acid chain: Bifunctional protein FolD (285 aa).

Residues 165 to 167 (GRS) and Ser190 contribute to the NADP(+) site.

It belongs to the tetrahydrofolate dehydrogenase/cyclohydrolase family. Homodimer.

The catalysed reaction is (6R)-5,10-methylene-5,6,7,8-tetrahydrofolate + NADP(+) = (6R)-5,10-methenyltetrahydrofolate + NADPH. It catalyses the reaction (6R)-5,10-methenyltetrahydrofolate + H2O = (6R)-10-formyltetrahydrofolate + H(+). It participates in one-carbon metabolism; tetrahydrofolate interconversion. In terms of biological role, catalyzes the oxidation of 5,10-methylenetetrahydrofolate to 5,10-methenyltetrahydrofolate and then the hydrolysis of 5,10-methenyltetrahydrofolate to 10-formyltetrahydrofolate. The protein is Bifunctional protein FolD of Burkholderia multivorans (strain ATCC 17616 / 249).